A 490-amino-acid polypeptide reads, in one-letter code: Glutamate--tRNA ligase (490 aa).

Positions 15 to 25 match the 'HIGH' region motif; sequence PSPTGYLHVGG. Residues 259–263 carry the 'KMSKS' region motif; the sequence is KLSKR. K262 provides a ligand contact to ATP.

It belongs to the class-I aminoacyl-tRNA synthetase family. Glutamate--tRNA ligase type 1 subfamily. Monomer.

Its subcellular location is the cytoplasm. It carries out the reaction tRNA(Glu) + L-glutamate + ATP = L-glutamyl-tRNA(Glu) + AMP + diphosphate. Catalyzes the attachment of glutamate to tRNA(Glu) in a two-step reaction: glutamate is first activated by ATP to form Glu-AMP and then transferred to the acceptor end of tRNA(Glu). The sequence is that of Glutamate--tRNA ligase from Bdellovibrio bacteriovorus (strain ATCC 15356 / DSM 50701 / NCIMB 9529 / HD100).